The chain runs to 161 residues: Nucleotide-binding protein Bmul_0741/BMULJ_02519 (161 aa).

The protein belongs to the YajQ family.

Its function is as follows. Nucleotide-binding protein. This Burkholderia multivorans (strain ATCC 17616 / 249) protein is Nucleotide-binding protein Bmul_0741/BMULJ_02519.